Consider the following 102-residue polypeptide: uncharacterized protein (102 aa).

This is an uncharacterized protein from Sinorhizobium fredii (strain NBRC 101917 / NGR234).